The following is a 372-amino-acid chain: Glutamate 5-kinase (372 aa).

An ATP-binding site is contributed by Lys14. 3 residues coordinate substrate: Ser54, Asp141, and Asn153. 173 to 174 (TD) is a binding site for ATP. The region spanning 280 to 358 (RGTLVLDDGA…EAIVRELGYM (79 aa)) is the PUA domain.

This sequence belongs to the glutamate 5-kinase family.

Its subcellular location is the cytoplasm. It carries out the reaction L-glutamate + ATP = L-glutamyl 5-phosphate + ADP. The protein operates within amino-acid biosynthesis; L-proline biosynthesis; L-glutamate 5-semialdehyde from L-glutamate: step 1/2. Its function is as follows. Catalyzes the transfer of a phosphate group to glutamate to form L-glutamate 5-phosphate. This is Glutamate 5-kinase from Pseudomonas syringae pv. tomato (strain ATCC BAA-871 / DC3000).